Consider the following 65-residue polypeptide: Large ribosomal subunit protein bL35 (65 aa).

The protein belongs to the bacterial ribosomal protein bL35 family.

The protein is Large ribosomal subunit protein bL35 of Erwinia tasmaniensis (strain DSM 17950 / CFBP 7177 / CIP 109463 / NCPPB 4357 / Et1/99).